Here is a 559-residue protein sequence, read N- to C-terminus: MNEHSLIEIEGLNKTFDDGYVSIRDISLNIKKGEFITILGPSGCGKTTLLRLLAGFEDPTYGKIKVNGIDIKDMAIHKRPFATVFQDYALFSHLTVYKNIAYGLKVMWTKLDEIPKLVSDYQKQLALKHLKLERKIEQLQKNNSNAQRIKKLKEKLQKLLEINKQKVIEFENKEKLRREDIYKNLEQLTKEWDLLSQKKLKEVEQQKQAIDKSFEKVENKYKKDPWFFQHSEIRLKQYQKKKTELKADIKATKNKEQIQKLTKELQTLKQKYANKKAIDKEYDKLVVAYNKKDYWTSYWETYTLQQKEAFEKRYLSRKLTKAEQNKKVSDVIEMVGLKGKEDRLPDELSGGMKQRVALARSLVVEPEILLLDEPLSALDAKVRKNLQKELQQIHKKSGLTFILVTHDQEEALVLSDRIVVMNEGNILQVGNPVDIYDSPKTEWIANFIGQANIFKGTYLGEKKIQLQSGEIIQTDVDNNYVVGKQYKILIRPEDFDLVPENKGFFNVRVIDKNYKGLLWKITTQLKDNTIVDLESVNEVDVNKTFGVLFDPIDVHLMEV.

Residues 7–448 enclose the ABC transporter domain; that stretch reads IEIEGLNKTF…PKTEWIANFI (442 aa). 40-47 contacts ATP; the sequence is GPSGCGKT. An insert region spans residues 108–317; sequence WTKLDEIPKL…EAFEKRYLSR (210 aa).

The protein belongs to the ABC transporter superfamily. Spermidine/putrescine importer (TC 3.A.1.11.1) family. The complex is composed of two ATP-binding proteins (PotA), two transmembrane proteins (PotB and PotC) and a solute-binding protein (PotD).

Its subcellular location is the cell membrane. It catalyses the reaction ATP + H2O + polyamine-[polyamine-binding protein]Side 1 = ADP + phosphate + polyamineSide 2 + [polyamine-binding protein]Side 1.. Functionally, part of the ABC transporter complex PotABCD involved in spermidine/putrescine import. Responsible for energy coupling to the transport system. This chain is Spermidine/putrescine import ATP-binding protein PotA, found in Mycoplasma genitalium (strain ATCC 33530 / DSM 19775 / NCTC 10195 / G37) (Mycoplasmoides genitalium).